We begin with the raw amino-acid sequence, 260 residues long: Thiamine thiazole synthase (260 aa).

Residues A36, 55 to 56, G63, and 154 to 156 contribute to the NAD(+) site; these read EQ and HVD. Fe cation is bound by residues D156 and H171. Residue M224 coordinates NAD(+). Glycine is bound at residue R234.

This sequence belongs to the THI4 family. Homooctamer; tetramer of dimers. Fe(2+) serves as cofactor.

The enzyme catalyses hydrogen sulfide + glycine + NAD(+) = ADP-5-ethyl-4-methylthiazole-2-carboxylate + nicotinamide + 3 H2O + H(+). The protein operates within cofactor biosynthesis; thiamine diphosphate biosynthesis. Functionally, involved in the biosynthesis of the thiazole moiety of thiamine. Catalyzes the conversion of NAD and glycine to adenosine diphosphate 5-(2-hydroxyethyl)-4-methylthiazole-2-carboxylate (ADT), an adenylated thiazole intermediate, using free sulfide as a source of sulfur. This Methanosarcina barkeri (strain Fusaro / DSM 804) protein is Thiamine thiazole synthase.